The chain runs to 745 residues: Elongation factor G, mitochondrial (745 aa).

The 278-residue stretch at 40–317 (ERIRNIGISA…AVLDYLPNPG (278 aa)) folds into the tr-type G domain. GTP is bound by residues 49–56 (AHIDSGKT), 116–120 (DTPGH), and 170–173 (NKLD).

Belongs to the TRAFAC class translation factor GTPase superfamily. Classic translation factor GTPase family. EF-G/EF-2 subfamily.

The protein resides in the mitochondrion. It functions in the pathway protein biosynthesis; polypeptide chain elongation. Its function is as follows. Mitochondrial GTPase that catalyzes the GTP-dependent ribosomal translocation step during translation elongation. During this step, the ribosome changes from the pre-translocational (PRE) to the post-translocational (POST) state as the newly formed A-site-bound peptidyl-tRNA and P-site-bound deacylated tRNA move to the P and E sites, respectively. Catalyzes the coordinated movement of the two tRNA molecules, the mRNA and conformational changes in the ribosome. Essential during development as it acts as a retrograde signal from mitochondria to the nucleus to slow down cell proliferation if mitochondrial energy output is low. The polypeptide is Elongation factor G, mitochondrial (Drosophila yakuba (Fruit fly)).